A 560-amino-acid chain; its full sequence is Dihydroxy-acid dehydratase (560 aa).

Residue Cys-52 coordinates [2Fe-2S] cluster. Asp-84 is a binding site for Mg(2+). Cys-125 serves as a coordination point for [2Fe-2S] cluster. Positions 126 and 127 each coordinate Mg(2+). Residue Lys-127 is modified to N6-carboxylysine. Residue Cys-197 coordinates [2Fe-2S] cluster. Glu-448 contacts Mg(2+). The active-site Proton acceptor is the Ser-474.

Belongs to the IlvD/Edd family. In terms of assembly, homodimer. [2Fe-2S] cluster is required as a cofactor. The cofactor is Mg(2+).

The enzyme catalyses (2R)-2,3-dihydroxy-3-methylbutanoate = 3-methyl-2-oxobutanoate + H2O. The catalysed reaction is (2R,3R)-2,3-dihydroxy-3-methylpentanoate = (S)-3-methyl-2-oxopentanoate + H2O. It functions in the pathway amino-acid biosynthesis; L-isoleucine biosynthesis; L-isoleucine from 2-oxobutanoate: step 3/4. It participates in amino-acid biosynthesis; L-valine biosynthesis; L-valine from pyruvate: step 3/4. Functionally, functions in the biosynthesis of branched-chain amino acids. Catalyzes the dehydration of (2R,3R)-2,3-dihydroxy-3-methylpentanoate (2,3-dihydroxy-3-methylvalerate) into 2-oxo-3-methylpentanoate (2-oxo-3-methylvalerate) and of (2R)-2,3-dihydroxy-3-methylbutanoate (2,3-dihydroxyisovalerate) into 2-oxo-3-methylbutanoate (2-oxoisovalerate), the penultimate precursor to L-isoleucine and L-valine, respectively. This is Dihydroxy-acid dehydratase from Francisella tularensis subsp. novicida (strain U112).